Consider the following 378-residue polypeptide: uncharacterized protein (378 aa).

11 helical membrane-spanning segments follow: residues 12 to 34 (SLAFALYDTGETILGALVVSTFF), 44 to 66 (VKIYSLSYGISLLASFALAIFLG), 92 to 112 (SIALLYGTPYLALLSFLLMLI), 132 to 154 (GFASGLGVSFGYVGSAIALIFLA), 161 to 180 (EVYAVVGLIFLILAVPSIIT), 200 to 222 (TFLLFLLSLLTLTEVANTLIAMM), 235 to 257 (VEIYRIIGFSALGGVLGGIFWGV), 267 to 285 (VFPLGFFLWSFFFILLFFA), 290 to 312 (LIFVGLLAGFSLAHLWSTSRVYI), 327 to 349 (FLSLTERVASSFGLFLWSFFLFI), and 356 to 373 (LSALLMGTLPLIGFFIYL).

The protein resides in the cell membrane. This is an uncharacterized protein from Aquifex aeolicus (strain VF5).